The following is a 447-amino-acid chain: Trigger factor (447 aa).

Residues 159–244 (GDMLLMQVES…VREIKEEKLP (86 aa)) form the PPIase FKBP-type domain.

It belongs to the FKBP-type PPIase family. Tig subfamily.

The protein localises to the cytoplasm. It carries out the reaction [protein]-peptidylproline (omega=180) = [protein]-peptidylproline (omega=0). Functionally, involved in protein export. Acts as a chaperone by maintaining the newly synthesized protein in an open conformation. Functions as a peptidyl-prolyl cis-trans isomerase. This chain is Trigger factor, found in Dehalococcoides mccartyi (strain ATCC BAA-2100 / JCM 16839 / KCTC 5957 / BAV1).